The chain runs to 620 residues: uncharacterized protein (620 aa).

The Radical SAM core domain occupies 324–586 (RRYVTIAIIK…HPWEKGIYPT (263 aa)). 3 residues coordinate [4Fe-4S] cluster: Cys338, Cys342, and Cys345. The residue at position 552 (Lys552) is an N6-(pyridoxal phosphate)lysine.

Belongs to the radical SAM superfamily. KamA family. It depends on [4Fe-4S] cluster as a cofactor. Pyridoxal 5'-phosphate is required as a cofactor.

This is an uncharacterized protein from Methanocaldococcus jannaschii (strain ATCC 43067 / DSM 2661 / JAL-1 / JCM 10045 / NBRC 100440) (Methanococcus jannaschii).